Here is an 84-residue protein sequence, read N- to C-terminus: U2-theraphotoxin-Cg1b 2 (84 aa).

The first 21 residues, 1 to 21, serve as a signal peptide directing secretion; sequence MKVSVLITLAVLGVMFLLTSA. A propeptide spanning residues 22–48 is cleaved from the precursor; that stretch reads EERGSDQMDSPAWLKSMEIIFQSEERE. Intrachain disulfides connect cysteine 49–cysteine 63, cysteine 56–cysteine 68, and cysteine 62–cysteine 76.

The protein belongs to the neurotoxin 10 (Hwtx-1) family. 06 (F4b) subfamily. Expressed by the venom gland.

The protein localises to the secreted. Functionally, probable ion channel inhibitor. In Chilobrachys guangxiensis (Chinese earth tiger tarantula), this protein is U2-theraphotoxin-Cg1b 2.